Consider the following 143-residue polypeptide: Rheacalcin-2 (143 aa).

3 disulfide bridges follow: Cys-6/Cys-17, Cys-34/Cys-139, and Cys-114/Cys-131. The region spanning 13-140 (FDGRCFGFFP…CSDRKPFICE (128 aa)) is the C-type lectin domain. Residues Ser-66 and Ser-68 each carry the phosphoserine modification.

The protein localises to the secreted. The protein resides in the extracellular space. Its subcellular location is the extracellular matrix. The polypeptide is Rheacalcin-2 (Rhea americana (Greater rhea)).